Consider the following 242-residue polypeptide: ADP-dependent L-serine kinase SerK (242 aa).

Glutamate 30 is a catalytic residue. 4 residues coordinate ADP: serine 43, isoleucine 49, tryptophan 51, and lysine 52. Valine 68 provides a ligand contact to O-phospho-L-serine. Aspartate 69, glycine 70, histidine 71, histidine 72, and arginine 73 together coordinate ADP. Mg(2+) is bound at residue aspartate 69. O-phospho-L-serine is bound by residues glycine 70, histidine 71, and histidine 72. 4 residues coordinate O-phospho-L-serine: tryptophan 102, lysine 221, threonine 223, and histidine 225.

Belongs to the SerK family. Mg(2+) is required as a cofactor.

The catalysed reaction is L-serine + ADP = O-phospho-L-serine + AMP + H(+). Its pathway is amino-acid biosynthesis; L-cysteine biosynthesis; L-cysteine from L-serine: step 1/2. Free serine kinase that uses ADP to phosphorylate L-serine to yield O-phospho-L-serine and AMP. The protein is ADP-dependent L-serine kinase SerK of Thermococcus kodakarensis (strain ATCC BAA-918 / JCM 12380 / KOD1) (Pyrococcus kodakaraensis (strain KOD1)).